Here is a 401-residue protein sequence, read N- to C-terminus: Solute carrier family 22 member 17 (401 aa).

10 helical membrane-spanning segments follow: residues 10-30 (GIVL…AAAG), 35-55 (IMAL…GVYL), 69-89 (VALA…GLAL), 100-120 (MITA…FLES), 184-203 (NIWK…HAIR), 218-238 (FYLC…FLGV), 247-267 (GILL…LGLW), 277-297 (TFSV…TLLA), 309-329 (GLGL…AQRL), and 336-356 (FLQH…IMLL).

The protein belongs to the major facilitator (TC 2.A.1) superfamily. Organic cation transporter (TC 2.A.1.19) family. As to expression, widely expressed.

It localises to the cell membrane. The protein localises to the vacuole membrane. Its function is as follows. Cell surface receptor for LCN2 (24p3) that plays a key role in iron homeostasis and transport. Able to bind iron-bound LCN2 (holo-24p3), followed by internalization of holo-24p3 and release of iron, thereby increasing intracellular iron concentration and leading to inhibition of apoptosis. Also binds iron-free LCN2 (apo-24p3), followed by internalization of apo-24p3 and its association with an intracellular siderophore, leading to iron chelation and iron transfer to the extracellular medium, thereby reducing intracellular iron concentration and resulting in apoptosis. In Mus musculus (Mouse), this protein is Solute carrier family 22 member 17 (Slc22a17).